We begin with the raw amino-acid sequence, 313 residues long: B3 domain-containing protein At2g31720 (313 aa).

Residues 80–110 (KNQDPEQNPNRVASSPSSCHLESKRPQKVVS) form a disordered region. Polar residues predominate over residues 84-99 (PEQNPNRVASSPSSCH). Positions 169–267 (WKQILDMDFL…MLFFAFVLSD (99 aa)) form a DNA-binding region, TF-B3.

Its subcellular location is the nucleus. In Arabidopsis thaliana (Mouse-ear cress), this protein is B3 domain-containing protein At2g31720 (ARF70).